The sequence spans 245 residues: Short-chain dehydrogenase/reductase pyiH (245 aa).

Residues isoleucine 18, arginine 42, aspartate 68, and asparagine 95 each coordinate NADP(+). Catalysis depends on serine 150, which acts as the Proton donor.

It belongs to the short-chain dehydrogenases/reductases (SDR) family.

It participates in mycotoxin biosynthesis. In terms of biological role, short-chain dehydrogenase/reductase; part of the gene cluster that mediates the biosynthesis of the mycotoxin pyrichalasin H, a tyrosine-derived cytochalasan that inhibits the growth of rice seedlings, but also inhibits lymphocyte capping and actin polymerization and alters cell morphology. Pyrichalasin H is indicated as the responsible agent for the genus-specific pathogenicity of M.grisea toward crabgrass. The first step in the pathway is catalyzed by the O-methyltransferase pyiA which methylates free tyrosine to generate the precursor O-methyltyrosine. The hybrid PKS-NRPS pyiS, assisted by the enoyl reductase pyiC, are responsible for fusion of the O-methyltyrosine precursor and the polyketide backbone. The polyketide synthase module (PKS) of pyiS is responsible for the synthesis of the polyketide backbone and the downstream nonribosomal peptide synthetase (NRPS) amidates the carboxyl end of the polyketide with the O-methyltyrosine precursor. As the NRPS A-domain demonstrates substrate tolerance, pyiS can also use phenylalanine, tyrosine and even para-chlorophenylalanine as amino acid precursor, which leads to the production of novel cytochalasans, including halogenated cytochalasans. Because pyiS lacks a designated enoylreductase (ER) domain, the required activity is provided the enoyl reductase pyiC. Reduction by the hydrolyase pyiE leads to 1,5-dihydropyrrolone, which is substrate for dehydration and intra-molecular Diels-Alder cyclization by the Diels-Alderase pyiF to yield the required isoindolone-fused macrocycle. The tailoring cytochrome P450 monooxygenases piyD and piyG catalyze the hydroxylation at C-18 and C-7, respectivily, whereas the short-chain dehydrogenase/reductase pyiH reduces the carbonyl at C-21 in preparation for the transfer of an acetyl group by the acetyltransferase pyiB. These 3 reactions whose order is not clear yet, lead to the production of O-methylpyrichalasin J, a deacetylated pyrichalasin H. Finally, pyiB to converts O-methylpyrichalasin J into the final product pyrichalasin H via acetylation of C-21. The protein is Short-chain dehydrogenase/reductase pyiH of Pyricularia grisea (Crabgrass-specific blast fungus).